A 1183-amino-acid chain; its full sequence is Translation initiation factor IF-2 (1183 aa).

Disordered regions lie at residues 65 to 512 (SSKN…KVHI) and 540 to 579 (LARP…AMEL). Basic and acidic residues predominate over residues 83 to 99 (TQKDQKTEPKKKNHDQT). The span at 100–130 (ELSQAKLNTLLKPSQTLIKSQGSSQANNQKA) shows a compositional bias: polar residues. Positions 220-229 (PKIDIQDKKP) are enriched in basic and acidic residues. The segment covering 231 to 270 (QPNNQKAKTRINQGEISPQKVGQGNIQKIKSQNKQNAPSR) has biased composition (polar residues). A compositionally biased stretch (basic and acidic residues) spans 288–304 (IRKEKPVNKPHTNEVRN). Polar residues-rich tracts occupy residues 321 to 336 (ANRQ…NNRI) and 357 to 367 (NRTTQGQNRPG). A compositionally biased stretch (basic and acidic residues) spans 485-499 (GRPDWDDSAKLDALR). 2 stretches are compositionally biased toward basic residues: residues 544–553 (SKPKVGKRNN) and 560–574 (LKKR…RQRR). Positions 675–847 (RRPPVVTVMG…VLLVTEVEDL (173 aa)) constitute a tr-type G domain. The tract at residues 684–691 (GHVDHGKT) is G1. 684–691 (GHVDHGKT) contributes to the GTP binding site. A G2 region spans residues 709-713 (GITQH). The segment at 734–737 (DTPG) is G3. GTP contacts are provided by residues 734 to 738 (DTPGH) and 788 to 791 (NKID). Positions 788–791 (NKID) are G4. Positions 824–826 (SAI) are G5.

Belongs to the TRAFAC class translation factor GTPase superfamily. Classic translation factor GTPase family. IF-2 subfamily.

The protein resides in the cytoplasm. In terms of biological role, one of the essential components for the initiation of protein synthesis. Protects formylmethionyl-tRNA from spontaneous hydrolysis and promotes its binding to the 30S ribosomal subunits. Also involved in the hydrolysis of GTP during the formation of the 70S ribosomal complex. In Prochlorococcus marinus (strain NATL2A), this protein is Translation initiation factor IF-2.